We begin with the raw amino-acid sequence, 205 residues long: Small ribosomal subunit protein uS4c (205 aa).

Residues 16 to 40 are disordered; it reads GKLPSLTNKTSKKRKSPGQPATSFK. One can recognise an S4 RNA-binding domain in the interval 93–161; sequence MRLDNIVHRI…IQKNIESKEL (69 aa).

It belongs to the universal ribosomal protein uS4 family. In terms of assembly, part of the 30S ribosomal subunit. Contacts protein S5. The interaction surface between S4 and S5 is involved in control of translational fidelity.

The protein localises to the plastid. It localises to the chloroplast. In terms of biological role, one of the primary rRNA binding proteins, it binds directly to 16S rRNA where it nucleates assembly of the body of the 30S subunit. With S5 and S12 plays an important role in translational accuracy. This is Small ribosomal subunit protein uS4c (rps4) from Euglena gracilis.